The sequence spans 440 residues: MSQMTPREIVHELDKHIVGQAEAKRAVAIALRNRWRRAQVGAPLRDEITPKNILMIGPTGVGKTEIARRLARLANAPFIKVEATKFTEVGYVGRDVESIIRDLTDAAIKMIRQTETAKVQSRAEAAAEERVLDALVPHASTWNAGEEGDSPARQKFRQKLRAGELNDKEIEIDVSAAPIGVEIMAPPGLEEMSSQLQNLFQNFQAGRTRTRKLRVRDALKLLKEEEAGKMINEEEIKLRAVHAVEQNGIVFLDELDKICKRADYGGPDVSREGVQRDLLPLVEGCTVSTKYGTIRTDHILFIASGAFHLAKPSDLIPELQGRFPIRVELNPLSADDFVRILTEPDASLTAQYAALLATEGVNLEFADSAIRRIAQISWEVNERTENIGARRLHTVLERLLEEISFDAADRSGTSITIDAGYVDAHLGSLALDEDLSRYIL.

ATP is bound by residues V18, 60–65, D253, E318, and R390; that span reads GVGKTE.

Belongs to the ClpX chaperone family. HslU subfamily. A double ring-shaped homohexamer of HslV is capped on each side by a ring-shaped HslU homohexamer. The assembly of the HslU/HslV complex is dependent on binding of ATP.

Its subcellular location is the cytoplasm. Its function is as follows. ATPase subunit of a proteasome-like degradation complex; this subunit has chaperone activity. The binding of ATP and its subsequent hydrolysis by HslU are essential for unfolding of protein substrates subsequently hydrolyzed by HslV. HslU recognizes the N-terminal part of its protein substrates and unfolds these before they are guided to HslV for hydrolysis. The sequence is that of ATP-dependent protease ATPase subunit HslU from Methylococcus capsulatus (strain ATCC 33009 / NCIMB 11132 / Bath).